The chain runs to 252 residues: Octanoyltransferase (252 aa).

Residues 56 to 237 enclose the BPL/LPL catalytic domain; that stretch reads ADTGDEIWLV…RLIANLDGAS (182 aa). Residues 96–103, 168–170, and 181–183 each bind substrate; these read RGGQITYH, ALG, and GLS. C199 acts as the Acyl-thioester intermediate in catalysis.

The protein belongs to the LipB family.

It is found in the cytoplasm. The catalysed reaction is octanoyl-[ACP] + L-lysyl-[protein] = N(6)-octanoyl-L-lysyl-[protein] + holo-[ACP] + H(+). Its pathway is protein modification; protein lipoylation via endogenous pathway; protein N(6)-(lipoyl)lysine from octanoyl-[acyl-carrier-protein]: step 1/2. Catalyzes the transfer of endogenously produced octanoic acid from octanoyl-acyl-carrier-protein onto the lipoyl domains of lipoate-dependent enzymes. Lipoyl-ACP can also act as a substrate although octanoyl-ACP is likely to be the physiological substrate. The chain is Octanoyltransferase from Burkholderia lata (strain ATCC 17760 / DSM 23089 / LMG 22485 / NCIMB 9086 / R18194 / 383).